Here is a 557-residue protein sequence, read N- to C-terminus: Eukaryotic translation initiation factor 3 subunit D-2 (557 aa).

The segment at 292–306 (QFDMLTVNETALEPP) is RNA gate. A disordered region spans residues 533–557 (FDSDNNDGEETSDDRPFLNSKDNKL). Residues 545-557 (DDRPFLNSKDNKL) show a composition bias toward basic and acidic residues.

Belongs to the eIF-3 subunit D family. As to quaternary structure, component of the eukaryotic translation initiation factor 3 (eIF-3) complex. The eIF-3 complex interacts with pix.

The protein resides in the cytoplasm. MRNA cap-binding component of the eukaryotic translation initiation factor 3 (eIF-3) complex, which is involved in protein synthesis of a specialized repertoire of mRNAs and, together with other initiation factors, stimulates binding of mRNA and methionyl-tRNAi to the 40S ribosome. The eIF-3 complex specifically targets and initiates translation of a subset of mRNAs involved in cell proliferation. In the eIF-3 complex, eif3d specifically recognizes and binds the 7-methylguanosine cap of a subset of mRNAs. The polypeptide is Eukaryotic translation initiation factor 3 subunit D-2 (Drosophila grimshawi (Hawaiian fruit fly)).